The chain runs to 277 residues: Thiazole synthase (277 aa).

Lys-116 (schiff-base intermediate with DXP) is an active-site residue. 1-deoxy-D-xylulose 5-phosphate contacts are provided by residues Gly-177, 203-204 (AG), and 225-226 (NT).

It belongs to the ThiG family. Homotetramer. Forms heterodimers with either ThiH or ThiS.

The protein localises to the cytoplasm. The enzyme catalyses [ThiS sulfur-carrier protein]-C-terminal-Gly-aminoethanethioate + 2-iminoacetate + 1-deoxy-D-xylulose 5-phosphate = [ThiS sulfur-carrier protein]-C-terminal Gly-Gly + 2-[(2R,5Z)-2-carboxy-4-methylthiazol-5(2H)-ylidene]ethyl phosphate + 2 H2O + H(+). It functions in the pathway cofactor biosynthesis; thiamine diphosphate biosynthesis. In terms of biological role, catalyzes the rearrangement of 1-deoxy-D-xylulose 5-phosphate (DXP) to produce the thiazole phosphate moiety of thiamine. Sulfur is provided by the thiocarboxylate moiety of the carrier protein ThiS. In vitro, sulfur can be provided by H(2)S. This is Thiazole synthase from Thermosynechococcus vestitus (strain NIES-2133 / IAM M-273 / BP-1).